A 20-amino-acid chain; its full sequence is Fibrinogen beta chain (20 aa).

Positions 1 to 20 are disordered; sequence ATDYEDEEFPGAVPPSVGAR. O-linked (GalNAc...) threonine glycosylation occurs at Thr-2. A Sulfotyrosine modification is found at Tyr-4.

In terms of assembly, heterohexamer; disulfide linked. Contains 2 sets of 3 non-identical chains (alpha, beta and gamma). The 2 heterotrimers are in head to head conformation with the N-termini in a small central domain. Post-translationally, conversion of fibrinogen to fibrin is triggered by thrombin, which cleaves fibrinopeptides A and B from alpha and beta chains, and thus exposes the N-terminal polymerization sites responsible for the formation of the soft clot.

Its subcellular location is the secreted. Functionally, cleaved by the protease thrombin to yield monomers which, together with fibrinogen alpha (FGA) and fibrinogen gamma (FGG), polymerize to form an insoluble fibrin matrix. Fibrin has a major function in hemostasis as one of the primary components of blood clots. In addition, functions during the early stages of wound repair to stabilize the lesion and guide cell migration during re-epithelialization. Was originally thought to be essential for platelet aggregation, based on in vitro studies using anticoagulated blood. However subsequent studies have shown that it is not absolutely required for thrombus formation in vivo. Enhances expression of SELP in activated platelets. Maternal fibrinogen is essential for successful pregnancy. Fibrin deposition is also associated with infection, where it protects against IFNG-mediated hemorrhage. May also facilitate the antibacterial immune response via both innate and T-cell mediated pathways. This is Fibrinogen beta chain (FGB) from Elephas maximus (Indian elephant).